The chain runs to 125 residues: Urotensin-2 (125 aa).

The first 20 residues, M1–S20, serve as a signal peptide directing secretion. The propeptide occupies L21–Y111. C119 and C124 are oxidised to a cystine.

It belongs to the urotensin-2 family.

Its subcellular location is the secreted. In terms of biological role, highly potent vasoconstrictor. This is Urotensin-2 (UTS2) from Macaca mulatta (Rhesus macaque).